The sequence spans 763 residues: Amine oxidase [copper-containing] 3 (763 aa).

The Cytoplasmic portion of the chain corresponds to 2-6 (TQKTT). A helical; Signal-anchor for type II membrane protein transmembrane segment spans residues 7–27 (LVLLALAVITIFALVCVLLAG). The Extracellular portion of the chain corresponds to 28–763 (RSGDGGRLSQ…AFSHGGFTYK (736 aa)). Asn137 is a glycosylation site (N-linked (GlcNAc...) asparagine). Cysteines 198 and 199 form a disulfide. 2 N-linked (GlcNAc...) asparagine glycosylation sites follow: Asn232 and Asn294. The active-site Proton acceptor is Asp386. Cysteines 404 and 430 form a disulfide. Tyr471 (schiff-base intermediate with substrate; via topaquinone) is an active-site residue. The residue at position 471 (Tyr471) is a 2',4',5'-topaquinone. Cu(2+) contacts are provided by His520 and His522. 4 residues coordinate Ca(2+): Asp529, Leu530, Asp531, and Glu572. Asn581 and Asn592 each carry an N-linked (GlcNAc...) asparagine glycan. Ca(2+) contacts are provided by Glu641 and Phe663. Asn666 carries N-linked (GlcNAc...) asparagine glycosylation. The Ca(2+) site is built by Glu667, Asp673, and Leu674. Cu(2+) is bound at residue His684. A disulfide bridge links Cys734 with Cys741.

Belongs to the copper/topaquinone oxidase family. In terms of assembly, homodimer; disulfide-linked. Probably forms heterodimers with AOC2. The cofactor is Cu(2+). It depends on Ca(2+) as a cofactor. L-topaquinone is required as a cofactor. Topaquinone (TPQ) is generated by copper-dependent autoxidation of a specific tyrosyl residue. In terms of processing, N- and O-glycosylated. In terms of tissue distribution, highly expressed in adipocytes, aorta and lung. Expressed at lower levels in heart, kidney, large intestine, liver, small intestine and stomach.

It is found in the cell membrane. The enzyme catalyses methylamine + O2 + H2O = formaldehyde + H2O2 + NH4(+). It carries out the reaction benzylamine + O2 + H2O = benzaldehyde + H2O2 + NH4(+). It catalyses the reaction 2-phenylethylamine + O2 + H2O = 2-phenylacetaldehyde + H2O2 + NH4(+). Its function is as follows. Catalyzes the oxidative deamination of primary amines to the corresponding aldehydes with the concomitant production of hydrogen peroxide and ammonia. Has a preference for the primary monoamines methylamine and benzylamine. Could also act on 2-phenylethylamine but much less efficiently. At endothelial cells surface can also function as a cell adhesion protein that participates in lymphocyte extravasation and recirculation by mediating the binding of lymphocytes to peripheral lymph node vascular endothelial cells in an L-selectin-independent fashion. The polypeptide is Amine oxidase [copper-containing] 3 (Rattus norvegicus (Rat)).